A 373-amino-acid chain; its full sequence is tRNA-specific 2-thiouridylase MnmA (373 aa).

Residues 12 to 19 (GMSGGVDS) and Met38 contribute to the ATP site. The segment at 98 to 100 (NPD) is interaction with target base in tRNA. The active-site Nucleophile is Cys103. The cysteines at positions 103 and 200 are disulfide-linked. Residue Gly127 participates in ATP binding. The interval 150–152 (KDQ) is interaction with tRNA. The Cysteine persulfide intermediate role is filled by Cys200. The tract at residues 312-313 (RY) is interaction with tRNA.

This sequence belongs to the MnmA/TRMU family.

The protein resides in the cytoplasm. The enzyme catalyses S-sulfanyl-L-cysteinyl-[protein] + uridine(34) in tRNA + AH2 + ATP = 2-thiouridine(34) in tRNA + L-cysteinyl-[protein] + A + AMP + diphosphate + H(+). Its function is as follows. Catalyzes the 2-thiolation of uridine at the wobble position (U34) of tRNA, leading to the formation of s(2)U34. The protein is tRNA-specific 2-thiouridylase MnmA of Streptococcus agalactiae serotype Ia (strain ATCC 27591 / A909 / CDC SS700).